Consider the following 760-residue polypeptide: Formate acetyltransferase 1 (760 aa).

The PFL domain occupies 3-625 (ELNEKLATAW…KTGNTPDGRR (623 aa)). Lysine 63 bears the N6-acetyllysine; alternate mark. Lysine 63 bears the N6-succinyllysine; alternate mark. At lysine 107 the chain carries N6-succinyllysine. At lysine 117 the chain carries N6-acetyllysine; alternate. Position 117 is an N6-succinyllysine; alternate (lysine 117). At lysine 124 the chain carries N6-succinyllysine. The residue at position 195 (lysine 195) is an N6-acetyllysine; alternate. Position 195 is an N6-succinyllysine; alternate (lysine 195). Cysteine 419 serves as the catalytic S-acetylcysteine intermediate. Cysteine 420 serves as the catalytic Cysteine radical intermediate. Lysine 454 bears the N6-acetyllysine; alternate mark. Lysine 454 carries the N6-succinyllysine; alternate modification. An N6-succinyllysine modification is found at lysine 467. Lysine 541 and lysine 591 each carry N6-acetyllysine. The Glycine radical domain maps to 632-760 (PGANPMHGRD…VITRTFTQSM (129 aa)). Lysine 654 is modified (N6-succinyllysine). Glycine 735 bears the Glycine radical mark.

It belongs to the glycyl radical enzyme (GRE) family. PFL subfamily. Homodimer. Interacts specifically with FocA.

It localises to the cytoplasm. It catalyses the reaction formate + acetyl-CoA = pyruvate + CoA. It participates in fermentation; pyruvate fermentation; formate from pyruvate: step 1/1. In terms of biological role, catalyzes the conversion of pyruvate to formate and acetyl-CoA. In addition, may be involved in the control of the activity of the formate channel FocA, via direct interaction with FocA. This is Formate acetyltransferase 1 (pflB) from Escherichia coli (strain K12).